A 505-amino-acid chain; its full sequence is Trans-cinnamate 4-monooxygenase (505 aa).

A helical membrane pass occupies residues 3 to 23; it reads LLLLEKTLLGSFVAILVAILV. (E)-cinnamate is bound by residues 213-218 and Ala306; that span reads RSRLAQ. Residue Cys447 coordinates heme.

Belongs to the cytochrome P450 family. The cofactor is heme.

The protein localises to the membrane. It carries out the reaction (E)-cinnamate + reduced [NADPH--hemoprotein reductase] + O2 = (E)-4-coumarate + oxidized [NADPH--hemoprotein reductase] + H2O + H(+). The protein operates within phenylpropanoid metabolism; trans-4-coumarate biosynthesis; trans-4-coumarate from trans-cinnamate: step 1/1. Catalyzes the first oxidative step of the phenylpropanoid pathway in higher plants by transforming trans-cinnamate into p-coumarate. The compounds formed by this pathway are essential components for lignification, pollination, and defense against ultraviolet light, predators and pathogens. This is Trans-cinnamate 4-monooxygenase (CYP73A13) from Populus tremuloides (Quaking aspen).